We begin with the raw amino-acid sequence, 359 residues long: 3-dehydroquinate synthase (359 aa).

Residues 71–76 (DGEAYK), 105–109 (GVVGD), 129–130 (TT), Lys-142, and Lys-151 each bind NAD(+). 3 residues coordinate Zn(2+): Glu-184, His-247, and His-264.

The protein belongs to the sugar phosphate cyclases superfamily. Dehydroquinate synthase family. It depends on Co(2+) as a cofactor. The cofactor is Zn(2+). NAD(+) serves as cofactor.

The protein resides in the cytoplasm. The enzyme catalyses 7-phospho-2-dehydro-3-deoxy-D-arabino-heptonate = 3-dehydroquinate + phosphate. The protein operates within metabolic intermediate biosynthesis; chorismate biosynthesis; chorismate from D-erythrose 4-phosphate and phosphoenolpyruvate: step 2/7. In terms of biological role, catalyzes the conversion of 3-deoxy-D-arabino-heptulosonate 7-phosphate (DAHP) to dehydroquinate (DHQ). This is 3-dehydroquinate synthase from Burkholderia orbicola (strain MC0-3).